A 221-amino-acid chain; its full sequence is Putative N-acetylmannosamine-6-phosphate 2-epimerase (221 aa).

This sequence belongs to the NanE family.

It catalyses the reaction an N-acyl-D-glucosamine 6-phosphate = an N-acyl-D-mannosamine 6-phosphate. It functions in the pathway amino-sugar metabolism; N-acetylneuraminate degradation; D-fructose 6-phosphate from N-acetylneuraminate: step 3/5. Its function is as follows. Converts N-acetylmannosamine-6-phosphate (ManNAc-6-P) to N-acetylglucosamine-6-phosphate (GlcNAc-6-P). The sequence is that of Putative N-acetylmannosamine-6-phosphate 2-epimerase from Clostridium perfringens (strain ATCC 13124 / DSM 756 / JCM 1290 / NCIMB 6125 / NCTC 8237 / Type A).